A 41-amino-acid chain; its full sequence is MKVRNSLKSLRARHRDNRLVRRKGRLYVINKVQRRFKARQG.

It belongs to the bacterial ribosomal protein bL36 family.

This chain is Large ribosomal subunit protein bL36, found in Rhodopseudomonas palustris (strain HaA2).